Consider the following 579-residue polypeptide: Zinc finger protein 248 (579 aa).

In terms of domain architecture, KRAB spans 8–79; that stretch reads VSFKDVCVDF…EKGFPSQCHP (72 aa). A C2H2-type 1; degenerate zinc finger spans residues 240-264; the sequence is TVCKYNECGRTFIESLKLNISQRPH. Residue Lys-341 forms a Glycyl lysine isopeptide (Lys-Gly) (interchain with G-Cter in SUMO2) linkage. 7 consecutive C2H2-type zinc fingers follow at residues 380–402, 408–430, 436–458, 464–486, 492–514, 520–543, and 548–570; these read FECGECGKTFWEKSNLTQHQRTH, YECTECGKAFCQKPHLTNHQRTH, YECKQCGKTFCVKSNLTEHQRTH, YECNACGKSFCHRSALTVHQRTH, FICNECGKSFCVKSNLIVHQRTH, YKCNECGKTFCEKSALTKHQRTHT, and YECNACGKTFSQRSVLTKHQRIH.

It belongs to the krueppel C2H2-type zinc-finger protein family.

It localises to the nucleus. Functionally, may be involved in transcriptional regulation. This Homo sapiens (Human) protein is Zinc finger protein 248 (ZNF248).